The sequence spans 86 residues: High affinity immunoglobulin epsilon receptor subunit gamma (86 aa).

Residues 1-18 (MIPAVVLLLLLLVEQAAA) form the signal peptide. Residues 19 to 23 (LGEPQ) are Extracellular-facing. The helical transmembrane segment at 24-44 (LCYILDAILFLYGIVLTLLYC) threads the bilayer. Residues 45–86 (RLKLQVRKAAIDSYEKSDGVYTGLSTRNQETYETLKHEKPPQ) lie on the Cytoplasmic side of the membrane. The region spanning 54–82 (AIDSYEKSDGVYTGLSTRNQETYETLKHE) is the ITAM domain. At Y65 the chain carries Phosphotyrosine. Phosphoserine is present on S69. Residue Y76 is modified to Phosphotyrosine. T78 is modified (phosphothreonine).

The protein belongs to the CD3Z/FCER1G family. In terms of assembly, igE Fc receptor is a tetramer of an alpha chain, a beta chain, and two disulfide linked gamma chains. Associates with FCGR1A; forms a functional signaling complex. The signaling subunit of immunoglobulin gamma (IgG) Fc receptor complex. As a homodimer or a heterodimer of CD247 and FCER1G, associates with the ligand binding subunit FCGR3A to form a functional receptor complex. Associates with CLEC6A. Interacts with CLEC4E. Interacts (via ITAM domain) with SYK (via SH2 domains); activates SYK, enabling integrin-mediated activation of neutrophils and macrophages. Interacts with common beta chain of interleukin 3 receptor CSF2RB and recruits SYK in response to IL3 stimulation; this interaction is direct. Interacts with CD300LH; the interaction may be indirect. Interacts with CD300LD. Interacts with TARM1.

The protein localises to the cell membrane. Adapter protein containing an immunoreceptor tyrosine-based activation motif (ITAM) that transduces activation signals from various immunoreceptors. As a component of the high-affinity immunoglobulin E (IgE) receptor, mediates allergic inflammatory signaling in mast cells. As a constitutive component of interleukin-3 receptor complex, selectively mediates interleukin 4/IL4 production b basophils priming T-cells toward effector T-helper 2 subset. Associates with pattern recognition receptors CLEC4D and CLEC4E to form a functional signaling complex in myeloid cells. Binding of mycobacterial trehalose 6,6'-dimycolate (TDM) to this receptor complex leads to phosphorylation of ITAM, triggering activation of SYK, CARD9 and NF-kappa-B, consequently driving maturation of antigen-presenting cells and shaping antigen-specific priming of T-cells toward effector T-helper 1 and T-helper 17 cell subtypes. May function cooperatively with other activating receptors. Functionally linked to integrin beta-2/ITGB2-mediated neutrophil activation. Also involved in integrin alpha-2/ITGA2-mediated platelet activation. In Sus scrofa (Pig), this protein is High affinity immunoglobulin epsilon receptor subunit gamma (FCER1G).